We begin with the raw amino-acid sequence, 240 residues long: UDP-2,3-diacylglucosamine hydrolase (240 aa).

Mn(2+) is bound by residues D8, H10, D41, N79, and H114. Residue 79-80 participates in substrate binding; the sequence is NR. 5 residues coordinate substrate: D122, S160, N164, K167, and H195. The Mn(2+) site is built by H195 and H197.

This sequence belongs to the LpxH family. Mn(2+) serves as cofactor.

The protein localises to the cell inner membrane. It carries out the reaction UDP-2-N,3-O-bis[(3R)-3-hydroxytetradecanoyl]-alpha-D-glucosamine + H2O = 2-N,3-O-bis[(3R)-3-hydroxytetradecanoyl]-alpha-D-glucosaminyl 1-phosphate + UMP + 2 H(+). It functions in the pathway glycolipid biosynthesis; lipid IV(A) biosynthesis; lipid IV(A) from (3R)-3-hydroxytetradecanoyl-[acyl-carrier-protein] and UDP-N-acetyl-alpha-D-glucosamine: step 4/6. Functionally, hydrolyzes the pyrophosphate bond of UDP-2,3-diacylglucosamine to yield 2,3-diacylglucosamine 1-phosphate (lipid X) and UMP by catalyzing the attack of water at the alpha-P atom. Involved in the biosynthesis of lipid A, a phosphorylated glycolipid that anchors the lipopolysaccharide to the outer membrane of the cell. In Serratia proteamaculans (strain 568), this protein is UDP-2,3-diacylglucosamine hydrolase.